The sequence spans 1321 residues: Adhesion G protein-coupled receptor A3 (1321 aa).

A signal peptide spans 1–33; it reads MEPPGRRRGRAQPPLLLPLSLLALLALLGGGGG. Over 34-761 the chain is Extracellular; it reads GGAAALPAGC…YTQAASLLHP (728 aa). Residues asparagine 81 and asparagine 98 are each glycosylated (N-linked (GlcNAc...) asparagine). LRR repeat units follow at residues 82 to 103, 106 to 127, 130 to 151, and 154 to 175; these read RTVT…SFSG, LLER…AFWG, SLKR…IFRG, and NLVR…TFDY. N-linked (GlcNAc...) asparagine glycosylation is found at asparagine 159, asparagine 206, asparagine 301, asparagine 332, asparagine 433, asparagine 453, and asparagine 592. The region spanning 187–237 is the LRRCT domain; that stretch reads EYLLCDCNILWMHRWVKEKNITVRDTRCVYPKSLQAQPVTGVKQELLTCDP. Positions 242-340 constitute an Ig-like domain; the sequence is PSFYMTPSHR…GNNTRTVDIV (99 aa). Residues cysteine 264 and cysteine 324 are joined by a disulfide bond. One can recognise a GAIN-B domain in the interval 583-750; it reads LDKQLSFKCN…AVLMDLTGSE (168 aa). Residues 594–620 form an LRR 5 repeat; it reads SNTFSSLALKNTIVEASIQLPPSLFSP. Asparagine 652, asparagine 687, and asparagine 728 each carry an N-linked (GlcNAc...) asparagine glycan. Residues 701-750 form a GPS region; that stretch reads AARWDFDLLNGQGGWKSDGCHILYSDENITTIQCYSLSNYAVLMDLTGSE. A disulfide bridge links cysteine 720 with cysteine 734. The chain crosses the membrane as a helical span at residues 762–782; it reads VVYTTAIILLLCLLAVIVSYI. At 783–796 the chain is on the cytoplasmic side; the sequence is YHHSLIRISLKSWH. A helical transmembrane segment spans residues 797-817; sequence MLVNLCFHIFLTCVVFVGGIT. The Extracellular segment spans residues 818–826; the sequence is QTRNASICQ. Asparagine 821 carries N-linked (GlcNAc...) asparagine glycosylation. Residues 827-847 form a helical membrane-spanning segment; the sequence is AVGIILHYSTLATVLWVGVTA. Residues 848–876 lie on the Cytoplasmic side of the membrane; it reads RNIYKQVTKKAKRCQDPDEPPPPPRPMLR. Residues 877 to 897 form a helical membrane-spanning segment; the sequence is FYLIGGGIPIIVCGITAAANI. The Extracellular segment spans residues 898-919; sequence KNYGSRPNAPYCWMAWEPSLGA. The chain crosses the membrane as a helical span at residues 920–940; sequence FYGPASFITFVNCMYFLSIFI. At 941–996 the chain is on the cytoplasmic side; that stretch reads QLKRHPERKYELKEPTEEQQRLAANENGEINHQDSMSLSLISTSALENEHTFHSQL. Residues 997 to 1017 form a helical membrane-spanning segment; that stretch reads LGASLTLLLYVALWMFGALAV. Topologically, residues 1018–1024 are extracellular; it reads SLYYPLD. A helical membrane pass occupies residues 1025 to 1045; it reads LVFSFVFGATSLSFSAFFVVH. Topologically, residues 1046–1321 are cytoplasmic; sequence HCVNREDVRL…TGLWKHETTV (276 aa). Polar residues predominate over residues 1073 to 1083; sequence NVQPPNSNGTN. Disordered stretches follow at residues 1073 to 1094, 1198 to 1219, 1231 to 1265, and 1294 to 1321; these read NVQP…NSSA, VEGS…GHSR, QYNP…KKDA, and SNGQ…ETTV. A compositionally biased stretch (polar residues) spans 1233 to 1250; it reads NPPQQDSSDACSTLPKSS. A PDZ-binding motif is present at residues 1319–1321; the sequence is TTV.

This sequence belongs to the G-protein coupled receptor 2 family. Adhesion G-protein coupled receptor (ADGR) subfamily. Interacts (via PDZ-binding motif) with DLG1.

It localises to the membrane. Orphan receptor that may have a role in planar cell polarity pathway. The protein is Adhesion G protein-coupled receptor A3 of Homo sapiens (Human).